We begin with the raw amino-acid sequence, 159 residues long: 2-C-methyl-D-erythritol 2,4-cyclodiphosphate synthase (159 aa).

A divalent metal cation contacts are provided by aspartate 8 and histidine 10. Residues 8–10 (DVH) and 34–35 (HS) contribute to the 4-CDP-2-C-methyl-D-erythritol 2-phosphate site. Histidine 42 lines the a divalent metal cation pocket. Residues 56-58 (DIG), 61-65 (FPDTD), 100-106 (AQAPKML), 132-135 (TTTE), phenylalanine 139, and arginine 142 contribute to the 4-CDP-2-C-methyl-D-erythritol 2-phosphate site.

The protein belongs to the IspF family. As to quaternary structure, homotrimer. Requires a divalent metal cation as cofactor.

It carries out the reaction 4-CDP-2-C-methyl-D-erythritol 2-phosphate = 2-C-methyl-D-erythritol 2,4-cyclic diphosphate + CMP. Its pathway is isoprenoid biosynthesis; isopentenyl diphosphate biosynthesis via DXP pathway; isopentenyl diphosphate from 1-deoxy-D-xylulose 5-phosphate: step 4/6. Involved in the biosynthesis of isopentenyl diphosphate (IPP) and dimethylallyl diphosphate (DMAPP), two major building blocks of isoprenoid compounds. Catalyzes the conversion of 4-diphosphocytidyl-2-C-methyl-D-erythritol 2-phosphate (CDP-ME2P) to 2-C-methyl-D-erythritol 2,4-cyclodiphosphate (ME-CPP) with a corresponding release of cytidine 5-monophosphate (CMP). The polypeptide is 2-C-methyl-D-erythritol 2,4-cyclodiphosphate synthase (Klebsiella pneumoniae subsp. pneumoniae (strain ATCC 700721 / MGH 78578)).